A 268-amino-acid chain; its full sequence is Endonuclease 8 1 (268 aa).

P2 acts as the Schiff-base intermediate with DNA in catalysis. E3 acts as the Proton donor in catalysis. K52 acts as the Proton donor; for beta-elimination activity in catalysis. DNA is bound by residues R125 and N166. The FPG-type zinc finger occupies 234–268 (YVYRRAGEPCRVCGGVIRTALLEGRNVFWCPVCQT). R258 (proton donor; for delta-elimination activity) is an active-site residue.

Belongs to the FPG family. Requires Zn(2+) as cofactor.

The catalysed reaction is 2'-deoxyribonucleotide-(2'-deoxyribose 5'-phosphate)-2'-deoxyribonucleotide-DNA = a 3'-end 2'-deoxyribonucleotide-(2,3-dehydro-2,3-deoxyribose 5'-phosphate)-DNA + a 5'-end 5'-phospho-2'-deoxyribonucleoside-DNA + H(+). Involved in base excision repair of DNA damaged by oxidation or by mutagenic agents. Acts as a DNA glycosylase that recognizes and removes damaged bases. Has AP (apurinic/apyrimidinic) lyase activity and introduces nicks in the DNA strand. Cleaves the DNA backbone by beta-delta elimination to generate a single-strand break at the site of the removed base with both 3'- and 5'-phosphates. This is Endonuclease 8 1 (nei1) from Mycobacterium bovis (strain ATCC BAA-935 / AF2122/97).